The chain runs to 288 residues: Threonine-rich protein (288 aa).

The signal sequence occupies residues methionine 1–serine 20. Residues threonine 141–glycine 150 are compositionally biased toward polar residues. The tract at residues threonine 141 to threonine 260 is disordered. Residues asparagine 151–proline 253 are compositionally biased toward low complexity.

As to expression, component of the acid-insoluble and acid-soluble organic matrix of the aragonitic skeleton (at protein level).

It is found in the secreted. This is Threonine-rich protein from Acropora millepora (Staghorn coral).